We begin with the raw amino-acid sequence, 98 residues long: NADH-ubiquinone oxidoreductase chain 4L (98 aa).

3 helical membrane-spanning segments follow: residues 2–22, 29–49, and 61–81; these read PSIS…MLVF, SLLC…LFIM, and ILLL…LVMV.

It belongs to the complex I subunit 4L family. Core subunit of respiratory chain NADH dehydrogenase (Complex I) which is composed of 45 different subunits.

The protein resides in the mitochondrion inner membrane. The enzyme catalyses a ubiquinone + NADH + 5 H(+)(in) = a ubiquinol + NAD(+) + 4 H(+)(out). Core subunit of the mitochondrial membrane respiratory chain NADH dehydrogenase (Complex I) which catalyzes electron transfer from NADH through the respiratory chain, using ubiquinone as an electron acceptor. Part of the enzyme membrane arm which is embedded in the lipid bilayer and involved in proton translocation. This Lepilemur mitsinjoensis (Mitsinjo sportive lemur) protein is NADH-ubiquinone oxidoreductase chain 4L (MT-ND4L).